Here is a 648-residue protein sequence, read N- to C-terminus: DNA ligase (648 aa).

NAD(+) is bound by residues 30–34 and 79–80; these read DEEYD and SQ. Catalysis depends on Lys110, which acts as the N6-AMP-lysine intermediate. NAD(+)-binding residues include Arg131, Glu165, Lys280, and Lys304. Residues Cys398, Cys401, Cys414, and Cys419 each coordinate Zn(2+). Residues 573–648 enclose the BRCT domain; the sequence is VSENPFKNKT…LTEEEMNSLF (76 aa).

It belongs to the NAD-dependent DNA ligase family. LigA subfamily. Mg(2+) is required as a cofactor. It depends on Mn(2+) as a cofactor.

The catalysed reaction is NAD(+) + (deoxyribonucleotide)n-3'-hydroxyl + 5'-phospho-(deoxyribonucleotide)m = (deoxyribonucleotide)n+m + AMP + beta-nicotinamide D-nucleotide.. DNA ligase that catalyzes the formation of phosphodiester linkages between 5'-phosphoryl and 3'-hydroxyl groups in double-stranded DNA using NAD as a coenzyme and as the energy source for the reaction. It is essential for DNA replication and repair of damaged DNA. The chain is DNA ligase from Aliarcobacter butzleri (strain RM4018) (Arcobacter butzleri).